Reading from the N-terminus, the 90-residue chain is MDTQGVATDPQLQQFIEIESQKQRFQQLVHQMTEVCWEKCMDKPGPKLDSRTEVCFVNCVERFIDTSQFILNRLEQTQRSRGAFSETMTD.

The Twin CX3C motif signature appears at 36 to 59 (CWEKCMDKPGPKLDSRTEVCFVNC). Disulfide bonds link Cys-36/Cys-59 and Cys-40/Cys-55.

Belongs to the small Tim family. Heterohexamer; composed of 3 copies of TIMM8A and 3 copies of TIMM13, named soluble 70 kDa complex. Associates with the TIM22 complex, whose core is composed of TIMM22.

The protein resides in the mitochondrion inner membrane. Mitochondrial intermembrane chaperone that participates in the import and insertion of some multi-pass transmembrane proteins into the mitochondrial inner membrane. Also required for the transfer of beta-barrel precursors from the TOM complex to the sorting and assembly machinery (SAM complex) of the outer membrane. Acts as a chaperone-like protein that protects the hydrophobic precursors from aggregation and guide them through the mitochondrial intermembrane space. The TIMM8-TIMM13 complex mediates the import of some proteins while the predominant TIMM9-TIMM10 70 kDa complex mediates the import of much more proteins. This chain is Mitochondrial import inner membrane translocase subunit Tim8 A (timm8a), found in Danio rerio (Zebrafish).